Here is a 26-residue protein sequence, read N- to C-terminus: Histone H2B.1, sperm (26 aa).

The interval 1-26 (MPSQKSPTKRSPTKRSPQKGGKGAKR) is disordered. 3 short sequence motifs (SPKK motif) span residues 6–9 (SPTK), 11–14 (SPTK), and 16–19 (SPQK). Over residues 7 to 26 (PTKRSPTKRSPQKGGKGAKR) the composition is skewed to basic residues. Residues S11 and S16 each carry the phosphoserine modification.

The protein belongs to the histone H2B family. As to quaternary structure, the nucleosome is a histone octamer containing two molecules each of H2A, H2B, H3 and H4 assembled in one H3-H4 heterotetramer and two H2A-H2B heterodimers. The octamer wraps approximately 147 bp of DNA. In terms of processing, monoubiquitination gives a specific tag for epigenetic transcriptional activation and is also prerequisite for histone H3 'Lys-4' and 'Lys-79' methylation. Phosphorylated on SPKK motifs 2 and 3; which may regulate DNA binding. Dephosphorylated during maturation of spermatids to mature sperm and rephosphorylated at fertilization.

It localises to the nucleus. It is found in the chromosome. Core component of nucleosome. Nucleosomes wrap and compact DNA into chromatin, limiting DNA accessibility to the cellular machineries which require DNA as a template. Histones thereby play a central role in transcription regulation, DNA repair, DNA replication and chromosomal stability. DNA accessibility is regulated via a complex set of post-translational modifications of histones, also called histone code, and nucleosome remodeling. The protein is Histone H2B.1, sperm of Echinus esculentus (Sea urchin).